Consider the following 333-residue polypeptide: MQQYSCKYNKQAILLVNLGTPDNYDTKSIKRYLKEFLSDPRVIEANPVLWKIILNLIILPIRAKKNVHTYKTVWNKQHNKSPLLFYTENLADKLDKKLDNYIVDYAMRYGNPSIESKIKSLQDQGATEIIIFPLYPQYSATTTATVYDEVYRVLSKLRWQPTIKGINPYYDNKFHIQTISQQIKEHLKKLDSTPDTVLFSFHGLPKEYFDKGDPYYCHCYKTYRLVKEELQNEYPNIDFELSFQSRFGPKKWLEPYTTVKLEEFTKQNKSVVVIAPGFSADCLETLEELAISEKENFIKKGGKEFSLIPCLNDSNQHVDMLYNIIDEEICLKK.

Positions 202 and 284 each coordinate Fe cation.

This sequence belongs to the ferrochelatase family.

Its subcellular location is the cytoplasm. The enzyme catalyses heme b + 2 H(+) = protoporphyrin IX + Fe(2+). It functions in the pathway porphyrin-containing compound metabolism; protoheme biosynthesis; protoheme from protoporphyrin-IX: step 1/1. Functionally, catalyzes the ferrous insertion into protoporphyrin IX. The chain is Ferrochelatase from Francisella tularensis subsp. tularensis (strain FSC 198).